Reading from the N-terminus, the 137-residue chain is MGDDGVGIKIGRELKRQGYKVEELGTDIFSLMRVYNGENKVIIVDAVLGEIPGKVVYFKGEDIFKKLRAEIRSAHFMGAVEGLKLLLEVDERLKNAELHFVGVTIKEPKLGLELSEEVKRAIPRAMELILSIIREGE.

The protein is Protein FrxA (frxA) of Pyrococcus furiosus (strain ATCC 43587 / DSM 3638 / JCM 8422 / Vc1).